The following is a 296-amino-acid chain: Lipoyl synthase (296 aa).

[4Fe-4S] cluster is bound by residues Cys-38, Cys-43, Cys-49, Cys-64, Cys-68, Cys-71, and Ser-279. The Radical SAM core domain maps to 50 to 268 (WDGGCLTFMV…AEYGRSLGFK (219 aa)).

It belongs to the radical SAM superfamily. Lipoyl synthase family. The cofactor is [4Fe-4S] cluster.

The protein localises to the cytoplasm. It carries out the reaction [[Fe-S] cluster scaffold protein carrying a second [4Fe-4S](2+) cluster] + N(6)-octanoyl-L-lysyl-[protein] + 2 oxidized [2Fe-2S]-[ferredoxin] + 2 S-adenosyl-L-methionine + 4 H(+) = [[Fe-S] cluster scaffold protein] + N(6)-[(R)-dihydrolipoyl]-L-lysyl-[protein] + 4 Fe(3+) + 2 hydrogen sulfide + 2 5'-deoxyadenosine + 2 L-methionine + 2 reduced [2Fe-2S]-[ferredoxin]. It functions in the pathway protein modification; protein lipoylation via endogenous pathway; protein N(6)-(lipoyl)lysine from octanoyl-[acyl-carrier-protein]: step 2/2. Catalyzes the radical-mediated insertion of two sulfur atoms into the C-6 and C-8 positions of the octanoyl moiety bound to the lipoyl domains of lipoate-dependent enzymes, thereby converting the octanoylated domains into lipoylated derivatives. The polypeptide is Lipoyl synthase (Methanocella arvoryzae (strain DSM 22066 / NBRC 105507 / MRE50)).